A 413-amino-acid polypeptide reads, in one-letter code: Histidine--tRNA ligase (413 aa).

It belongs to the class-II aminoacyl-tRNA synthetase family. Homodimer.

Its subcellular location is the cytoplasm. It catalyses the reaction tRNA(His) + L-histidine + ATP = L-histidyl-tRNA(His) + AMP + diphosphate + H(+). The polypeptide is Histidine--tRNA ligase (Geobacter metallireducens (strain ATCC 53774 / DSM 7210 / GS-15)).